Here is a 96-residue protein sequence, read N- to C-terminus: Large ribosomal subunit protein uL23 (96 aa).

This sequence belongs to the universal ribosomal protein uL23 family. As to quaternary structure, part of the 50S ribosomal subunit. Contacts protein L29, and trigger factor when it is bound to the ribosome.

Functionally, one of the early assembly proteins it binds 23S rRNA. One of the proteins that surrounds the polypeptide exit tunnel on the outside of the ribosome. Forms the main docking site for trigger factor binding to the ribosome. The protein is Large ribosomal subunit protein uL23 of Vesicomyosocius okutanii subsp. Calyptogena okutanii (strain HA).